The following is a 33-amino-acid chain: Cytochrome b6-f complex subunit 7 (33 aa).

The helical transmembrane segment at 5-25 (IFNTAVITFTLVLVGLGAGYL) threads the bilayer.

The protein belongs to the PetM family. As to quaternary structure, the 4 large subunits of the cytochrome b6-f complex are cytochrome b6, subunit IV (17 kDa polypeptide, PetD), cytochrome f and the Rieske protein, while the 4 small subunits are PetG, PetL, PetM and PetN. The complex functions as a dimer.

It localises to the cellular thylakoid membrane. Component of the cytochrome b6-f complex, which mediates electron transfer between photosystem II (PSII) and photosystem I (PSI), cyclic electron flow around PSI, and state transitions. This is Cytochrome b6-f complex subunit 7 from Thermosynechococcus vestitus (strain NIES-2133 / IAM M-273 / BP-1).